A 118-amino-acid chain; its full sequence is Non-specific lipid-transfer protein (118 aa).

The N-terminal stretch at 1–25 is a signal peptide; that stretch reads MDCIRILWSVAVGLLLVSWRPTMFA. 4 cysteine pairs are disulfide-bonded: cysteine 30–cysteine 76, cysteine 40–cysteine 53, cysteine 54–cysteine 98, and cysteine 74–cysteine 113.

The protein belongs to the plant LTP family.

Functionally, plant non-specific lipid-transfer proteins transfer phospholipids as well as galactolipids across membranes. May play a role in wax or cutin deposition in the cell walls of expanding epidermal cells and certain secretory tissues. The protein is Non-specific lipid-transfer protein of Ambrosia artemisiifolia (Common ragweed).